We begin with the raw amino-acid sequence, 602 residues long: Pyranose dehydrogenase 1 (602 aa).

The N-terminal stretch at 1–25 (MLPRVTKLNSRLLSLALLGIQIARG) is a signal peptide. N-linked (GlcNAc...) asparagine glycosylation is present at asparagine 100. Histidine 128 bears the Tele-8alpha-FAD histidine mark. Asparagine 200, asparagine 277, and asparagine 344 each carry an N-linked (GlcNAc...) asparagine glycan. The active-site Proton acceptor is histidine 537. Residue histidine 581 is part of the active site.

The protein belongs to the GMC oxidoreductase family. In terms of assembly, monomer. FAD is required as a cofactor. In terms of processing, N-glycosylated.

The protein resides in the secreted. The catalysed reaction is pyranose + acceptor = pyranos-2-ulose + reduced acceptor.. The enzyme catalyses pyranose + acceptor = pyranos-3-ulose + reduced acceptor.. It carries out the reaction pyranose + acceptor = pyranos-2,3-diulose + reduced acceptor.. It catalyses the reaction a pyranoside + acceptor = a pyranosid-3-ulose + reduced acceptor.. The catalysed reaction is a pyranoside + acceptor = a pyranosid-3,4-diulose + reduced acceptor.. Catalyzes the single-oxidation or sequential double oxidation reaction of carbohydrates primarily at carbon-2 and/or carbon-3 with the concomitant reduction of the flavin. The enzyme exhibits a broad sugar substrate specificity, oxidizing different aldopyranoses to the corresponding C-1, C-2, C-3 or C-1,2, C-2,3 and C-3,4 (di)dehydro sugars with substrate-specific regioselectivity. Accepts only a narrow range of electron acceptors such as substituted benzoquinones and complexed metal ions and reacts extremely slowly with O(2) as acceptor. May play a role in the natural recycling of plant matter by oxidizing all major monosaccharides in lignocellulose and by reducing quinone compounds or reactive radical species generated during lignin depolymerization. The polypeptide is Pyranose dehydrogenase 1 (Leucoagaricus meleagris (Western flat-topped agaric)).